The chain runs to 165 residues: Putative protein FAM86C1P (165 aa).

Belongs to the class I-like SAM-binding methyltransferase superfamily. EEF2KMT family. As to quaternary structure, interacts with EEF2KMT.

This chain is Putative protein FAM86C1P, found in Homo sapiens (Human).